Consider the following 101-residue polypeptide: Movement protein (101 aa).

The tract at residues 1 to 22 is disordered; it reads MDPQNSFLLQPRVPTAAPTSGG. The chain crosses the membrane as a helical span at residues 30–50; the sequence is EVAILSFVGLICFYLLYLWVL. Residues 79–101 form a disordered region; the sequence is NPIPNTQAPPSQGNPGPFVPGTG. Positions 80-92 are enriched in polar residues; the sequence is PIPNTQAPPSQGN.

This sequence belongs to the mastrevirus movement protein family. As to quaternary structure, interacts with the capsid protein (CP). Part of a MP-CP-viral DNA complex.

The protein resides in the host membrane. Involved in the viral transport within, and between cells. This is Movement protein from Avena sativa (Oat).